The primary structure comprises 225 residues: Ribosomal RNA large subunit methyltransferase E (225 aa).

S-adenosyl-L-methionine is bound by residues glycine 76, tryptophan 78, aspartate 99, aspartate 115, and aspartate 139. Catalysis depends on lysine 179, which acts as the Proton acceptor.

It belongs to the class I-like SAM-binding methyltransferase superfamily. RNA methyltransferase RlmE family.

It is found in the cytoplasm. It catalyses the reaction uridine(2552) in 23S rRNA + S-adenosyl-L-methionine = 2'-O-methyluridine(2552) in 23S rRNA + S-adenosyl-L-homocysteine + H(+). Its function is as follows. Specifically methylates the uridine in position 2552 of 23S rRNA at the 2'-O position of the ribose in the fully assembled 50S ribosomal subunit. This is Ribosomal RNA large subunit methyltransferase E from Afipia carboxidovorans (strain ATCC 49405 / DSM 1227 / KCTC 32145 / OM5) (Oligotropha carboxidovorans).